A 336-amino-acid chain; its full sequence is Retinol dehydrogenase 14 (336 aa).

At threonine 5 the chain carries Phosphothreonine. Position 50 to 56 (50 to 56) interacts with NADP(+); sequence GANSGLG. A substrate-binding site is contributed by serine 192. Tyrosine 217 functions as the Proton acceptor in the catalytic mechanism.

The protein belongs to the short-chain dehydrogenases/reductases (SDR) family. Widely expressed.

It catalyses the reaction all-trans-retinol + NADP(+) = all-trans-retinal + NADPH + H(+). The enzyme catalyses 9-cis-retinol + NADP(+) = 9-cis-retinal + NADPH + H(+). The catalysed reaction is 11-cis-retinol + NADP(+) = 11-cis-retinal + NADPH + H(+). Its pathway is cofactor metabolism; retinol metabolism. Retinol dehydrogenase with a clear preference for NADP. Displays high activity towards 9-cis, 11-cis and all-trans-retinol. Shows a very weak activity towards 13-cis-retinol. Has no activity towards steroid. The protein is Retinol dehydrogenase 14 (RDH14) of Homo sapiens (Human).